A 740-amino-acid chain; its full sequence is E3 ubiquitin-protein ligase WAV3 (740 aa).

A disordered region spans residues 14-105; the sequence is PRNSDAAAPD…AISNPSSPRS (92 aa). A compositionally biased stretch (low complexity) spans 49–67; sequence SGGSNPSTPRSTSSPSLRC. Positions 71–90 are enriched in polar residues; it reads DAQTPTAEQTSTPRSATKSP. The RING-type; atypical zinc finger occupies 122-167; sequence CGICLNSVKTGQGTAKYTAECSHAFHFPCIADYVRKQGKLVCPVCN. In terms of domain architecture, VWFA spans 332–476; sequence DLVVVVDVGG…IPVTEHGFGE (145 aa). Residues 677–709 form a disordered region; sequence QSQHQQQHNQRRRGSERETTTTMTLMDENGEPL.

As to quaternary structure, interacts with SINAT1, SINAT2, SINAT3, SINAT4, SINAT5, TOR1/SPR2 and FIP2. As to expression, expressed in root tips and leaf primordia.

The catalysed reaction is S-ubiquitinyl-[E2 ubiquitin-conjugating enzyme]-L-cysteine + [acceptor protein]-L-lysine = [E2 ubiquitin-conjugating enzyme]-L-cysteine + N(6)-ubiquitinyl-[acceptor protein]-L-lysine.. E3 ubiquitin-protein ligase involved in the regulation of root growth. Acts as a positive regulator of root gravitropism. Possesses E3 protein ligase activity in vitro. The protein is E3 ubiquitin-protein ligase WAV3 of Arabidopsis thaliana (Mouse-ear cress).